A 132-amino-acid chain; its full sequence is Small ribosomal subunit protein uS8c (132 aa).

The protein belongs to the universal ribosomal protein uS8 family. Part of the 30S ribosomal subunit.

Its subcellular location is the plastid. It localises to the cyanelle. In terms of biological role, one of the primary rRNA binding proteins, it binds directly to 16S rRNA central domain where it helps coordinate assembly of the platform of the 30S subunit. In Cyanophora paradoxa, this protein is Small ribosomal subunit protein uS8c (rps8).